A 162-amino-acid chain; its full sequence is ATP synthase subunit b', chloroplastic (162 aa).

A helical transmembrane segment spans residues 26–46 (ATLPLQALQFILLTVLLTFIF).

It belongs to the ATPase B chain family. F-type ATPases have 2 components, F(1) - the catalytic core - and F(0) - the membrane proton channel. F(1) has five subunits: alpha(3), beta(3), gamma(1), delta(1), epsilon(1). F(0) has four main subunits: a(1), b(1), b'(1) and c(10-14). The alpha and beta chains form an alternating ring which encloses part of the gamma chain. F(1) is attached to F(0) by a central stalk formed by the gamma and epsilon chains, while a peripheral stalk is formed by the delta, b and b' chains.

It localises to the plastid. The protein resides in the chloroplast thylakoid membrane. Its function is as follows. F(1)F(0) ATP synthase produces ATP from ADP in the presence of a proton or sodium gradient. F-type ATPases consist of two structural domains, F(1) containing the extramembraneous catalytic core and F(0) containing the membrane proton channel, linked together by a central stalk and a peripheral stalk. During catalysis, ATP synthesis in the catalytic domain of F(1) is coupled via a rotary mechanism of the central stalk subunits to proton translocation. In terms of biological role, component of the F(0) channel, it forms part of the peripheral stalk, linking F(1) to F(0). The b'-subunit is a diverged and duplicated form of b found in plants and photosynthetic bacteria. The polypeptide is ATP synthase subunit b', chloroplastic (Emiliania huxleyi (Coccolithophore)).